We begin with the raw amino-acid sequence, 894 residues long: Alpha-actinin-2 (894 aa).

An actin-binding region spans residues 1–254 (MNQIEPGVQY…IMTYVSCFYH (254 aa)). 2 consecutive Calponin-homology (CH) domains span residues 38–142 (KQQR…LRFA) and 151–257 (TSAK…HAFA). The residue at position 237 (Thr237) is a Phosphothreonine. 4 Spectrin repeats span residues 281–391 (RLME…WLLN), 401–506 (HLAE…ALER), 516–627 (QLHL…SLQE), and 637–740 (RLRR…EVET). EF-hand domains are found at residues 753–788 (EQMN…MGYD) and 789–824 (LGEA…ETAD). Residues Asp766, Asn770, Asp777, Asp802, Asn804, and Thr808 each coordinate Ca(2+).

Belongs to the alpha-actinin family. In terms of assembly, homodimer; antiparallel. Also forms heterodimers with ACTN3. Interacts with ADAM12, MYOZ1, MYOZ2 and MYOZ3. Interacts via its C-terminal region with the LDB3 PDZ domain. Interacts with XIRP2. Interacts with DST (via N-terminus). Interacts with PARVB. Interacts with SYNPO2. In terms of processing, ubiquitinated by FBXL22, leading to proteasomal degradation.

The protein resides in the cytoplasm. Its subcellular location is the myofibril. The protein localises to the sarcomere. It is found in the z line. Functionally, F-actin cross-linking protein which is thought to anchor actin to a variety of intracellular structures. This is a bundling protein. The protein is Alpha-actinin-2 (Actn2) of Mus musculus (Mouse).